The chain runs to 150 residues: Avidin-related protein 2 (150 aa).

The N-terminal stretch at 1-24 (MVHATSPLLLLLLLSLALVAPSLS) is a signal peptide. Residues 26–147 (RKCSLTGEWD…GNNDFTRQHT (122 aa)) enclose the Avidin-like domain. C28 and C105 are disulfide-bonded. Biotin contacts are provided by N36, S40, Y57, T59, and D63. 2 N-linked (GlcNAc...) asparagine glycosylation sites follow: N67 and N93. The biotin site is built by S95, S99, and N140.

In terms of assembly, homotetramer. In terms of processing, glycosylated.

It localises to the secreted. In terms of biological role, forms a strong non-covalent specific complex with biotin. The chain is Avidin-related protein 2 (AVR2) from Gallus gallus (Chicken).